We begin with the raw amino-acid sequence, 206 residues long: Large ribosomal subunit protein uL4 (206 aa).

The disordered stretch occupies residues 46–95 (GNRAQKTRAEVKHSTKKPWRQKGTGRARSGMTSSPLWRKGGRAFPNKPDE). The span at 59–70 (STKKPWRQKGTG) shows a compositional bias: basic residues.

Belongs to the universal ribosomal protein uL4 family. In terms of assembly, part of the 50S ribosomal subunit.

Functionally, one of the primary rRNA binding proteins, this protein initially binds near the 5'-end of the 23S rRNA. It is important during the early stages of 50S assembly. It makes multiple contacts with different domains of the 23S rRNA in the assembled 50S subunit and ribosome. In terms of biological role, forms part of the polypeptide exit tunnel. The chain is Large ribosomal subunit protein uL4 from Neisseria meningitidis serogroup C (strain 053442).